The sequence spans 546 residues: Probable ganciclovir kinase (546 aa).

Polar residues predominate over residues 1–11 (MEQLKTPQNQK). Residues 1–29 (MEQLKTPQNQKTRPRNMLPKKKGKELKKR) form a disordered region. The segment covering 12–29 (TRPRNMLPKKKGKELKKR) has biased composition (basic residues). ATP-binding positions include 185 to 193 (LGSGSYGMV) and lysine 202. The active-site Proton acceptor is aspartate 297.

The protein belongs to the protein kinase superfamily. Tyr protein kinase family. HCMV ganciclovir subfamily.

Phosphorylates the antiviral nucleoside analog ganciclovir. This chain is Probable ganciclovir kinase (U69), found in Human herpesvirus 7 (strain JI) (HHV-7).